The chain runs to 290 residues: Proteasome assembly chaperone 1 (290 aa).

The tract at residues 1 to 39 (MAATFFGEVVKAPCRAGTEDEEEEEEEEGRRETPEDREV) is disordered. Ala-2 carries the N-acetylalanine modification. At Thr-18 the chain carries Phosphothreonine. Positions 28-39 (EGRRETPEDREV) are enriched in basic and acidic residues. A Phosphothreonine modification is found at Thr-56. Ser-182 carries the post-translational modification Phosphoserine. Residue Lys-266 is modified to N6-acetyllysine.

This sequence belongs to the PSMG1 family. Forms a heterodimer with PSMG2. The PSMG1-PSMG2 heterodimer interacts directly with the PSMA5 and PSMA7 proteasome alpha subunits. Degraded by the proteasome upon completion of 20S proteasome maturation.

The protein localises to the cytoplasm. It is found in the endoplasmic reticulum. Chaperone protein which promotes assembly of the 20S proteasome as part of a heterodimer with PSMG2. The PSMG1-PSMG2 heterodimer binds to the PSMA5 and PSMA7 proteasome subunits, promotes assembly of the proteasome alpha subunits into the heteroheptameric alpha ring and prevents alpha ring dimerization. The polypeptide is Proteasome assembly chaperone 1 (PSMG1) (Papio anubis (Olive baboon)).